The sequence spans 187 residues: Phosphoheptose isomerase (187 aa).

Positions 34 to 187 constitute an SIS domain; that stretch reads CIEALKNQKK…ILCSLIDESF (154 aa). 49–51 contributes to the substrate binding site; that stretch reads NGG. The Zn(2+) site is built by His58 and Glu62. Substrate is bound by residues Glu62, 91 to 92, 117 to 119, Ser122, and Gln169; these read ND and STS. Zn(2+) is bound by residues Gln169 and His177.

This sequence belongs to the SIS family. GmhA subfamily. Homotetramer. It depends on Zn(2+) as a cofactor.

The protein resides in the cytoplasm. The catalysed reaction is 2 D-sedoheptulose 7-phosphate = D-glycero-alpha-D-manno-heptose 7-phosphate + D-glycero-beta-D-manno-heptose 7-phosphate. Its pathway is carbohydrate biosynthesis; D-glycero-D-manno-heptose 7-phosphate biosynthesis; D-glycero-alpha-D-manno-heptose 7-phosphate and D-glycero-beta-D-manno-heptose 7-phosphate from sedoheptulose 7-phosphate: step 1/1. Catalyzes the isomerization of sedoheptulose 7-phosphate in D-glycero-D-manno-heptose 7-phosphate. The protein is Phosphoheptose isomerase of Nitratiruptor sp. (strain SB155-2).